The primary structure comprises 92 residues: Cell division protein FtsB (92 aa).

The Cytoplasmic segment spans residues 1–3 (MKV). The helical transmembrane segment at 4 to 21 (VPILLFVLLAALQYRLWF) threads the bilayer. At 22 to 92 (GKNSIPEYVA…TFYRILPSEE (71 aa)) the chain is on the periplasmic side. Residues 31 to 74 (AMEKSVAEQAEQNTELLQRNNLLKADIQDLKVGLEAVEERARNE) are a coiled coil.

It belongs to the FtsB family. As to quaternary structure, part of a complex composed of FtsB, FtsL and FtsQ.

The protein resides in the cell inner membrane. Essential cell division protein. May link together the upstream cell division proteins, which are predominantly cytoplasmic, with the downstream cell division proteins, which are predominantly periplasmic. This chain is Cell division protein FtsB, found in Pseudoalteromonas atlantica (strain T6c / ATCC BAA-1087).